The primary structure comprises 214 residues: Alkaline phosphatase-like protein (214 aa).

3 helical membrane-spanning segments follow: residues 48–68 (LGII…ALIL), 141–161 (FLIL…CLGA), and 177–197 (YSSV…LIFV).

It belongs to the DedA family.

It is found in the cell membrane. This is Alkaline phosphatase-like protein (apl) from Lactococcus lactis subsp. lactis (strain IL1403) (Streptococcus lactis).